A 560-amino-acid polypeptide reads, in one-letter code: MDIKRTILIVALAIVSYVMVLKWNQDYGQAALPTQNVASSTTTSGLPDTATGNNAAASDDIPRAASDTSAPAETPVAASKDLIQIKTDVLDLSIDPQGGDVAQLTLPLYPRRQDRPDVPFQLFDNGGERTYLAQSGLIGTNGPDANPAGRPIYSSEKKTYQLADGQDKLVVDLKFSKDGVNYIKRFTLKRGLYDVTVTYLIDNQSAQPWSGSMFAQLKRDASADPSSTTATGTATYLGAALWTSSEPYKKVSMKDMDKAQLKETVTGGWVAWLQHYFVTAWVAPKGENNIVQTRKDSKGNYIIGYTGPSLTAAPGAKVETSAVLYAGPKSQAVLKELSPGLELTVDYGILWFIAQPIFWLLQHIHSIVGNWGWSIIFLTMLIKGIFFPLSAASYKSMARMRAVAPKLAALKEQHGDDRQKMSQAMMELYKKEKINPLGGCLPILVQMPVFLSLYWVLLESVEMRQAPFMLWITDLSIKDPFFILPIIMGATMFIQQRLNPTPPDPMQAKVMKMMPIIFTFFFLWFPAGLVLYWVVNNCLSIAQQWYITRKIEAATKKAEA.

Residues 7–27 (ILIVALAIVSYVMVLKWNQDY) traverse the membrane as a helical segment. A compositionally biased stretch (polar residues) spans 38–56 (ASSTTTSGLPDTATGNNAA). A disordered region spans residues 38–76 (ASSTTTSGLPDTATGNNAAASDDIPRAASDTSAPAETPV). The next 4 helical transmembrane spans lie at 367–387 (IVGN…GIFF), 437–457 (LGGC…YWVL), 468–488 (FMLW…PIIM), and 515–535 (PIIF…YWVV).

This sequence belongs to the OXA1/ALB3/YidC family. Type 1 subfamily. As to quaternary structure, interacts with the Sec translocase complex via SecD. Specifically interacts with transmembrane segments of nascent integral membrane proteins during membrane integration.

It is found in the cell inner membrane. In terms of biological role, required for the insertion and/or proper folding and/or complex formation of integral membrane proteins into the membrane. Involved in integration of membrane proteins that insert both dependently and independently of the Sec translocase complex, as well as at least some lipoproteins. Aids folding of multispanning membrane proteins. The polypeptide is Membrane protein insertase YidC (Pseudomonas fluorescens (strain Pf0-1)).